A 370-amino-acid polypeptide reads, in one-letter code: MASRKLLLLPGDGIGPEAMAEVRKVIAFLNSDLNLGFETEEGLVGGCAYDAHGQAISDADMEKALAADAVLFGAVGGPKWDSVPYEVRPEAGLLRLRKDMQLYANLRPAICYPALAHSSSLKPEVIEGLDILILRELTGGVYFGEPKEIIDLGNGQKRGIDTQVYDTYEIERIADVAFELARTRRNKVTSMEKRNVMKSGVLWNQVVTARHKEKHADVQLEHMLADAGGMQLVRWPKQFDVILTDNLFGDLLSDVAAMLTGSLGMLPSASLGAADSKTGKRKALYEPVHGSAPDIAGKGIANPIAMIASLAMCLRYSFGLVAEADRLEAAIAGVLDDGIRTADIWSEGNTKVGTTEMGDAILAKFKALSA.

NAD(+) is bound at residue 77–90 (GPKWDSVPYEVRPE). The substrate site is built by R97, R107, R135, and D226. Residues D226, D250, and D254 each contribute to the Mg(2+) site. 290–302 (GSAPDIAGKGIAN) serves as a coordination point for NAD(+).

The protein belongs to the isocitrate and isopropylmalate dehydrogenases family. LeuB type 1 subfamily. Homodimer. It depends on Mg(2+) as a cofactor. The cofactor is Mn(2+).

The protein localises to the cytoplasm. The enzyme catalyses (2R,3S)-3-isopropylmalate + NAD(+) = 4-methyl-2-oxopentanoate + CO2 + NADH. The protein operates within amino-acid biosynthesis; L-leucine biosynthesis; L-leucine from 3-methyl-2-oxobutanoate: step 3/4. Its function is as follows. Catalyzes the oxidation of 3-carboxy-2-hydroxy-4-methylpentanoate (3-isopropylmalate) to 3-carboxy-4-methyl-2-oxopentanoate. The product decarboxylates to 4-methyl-2 oxopentanoate. The sequence is that of 3-isopropylmalate dehydrogenase from Brucella suis biovar 1 (strain 1330).